Consider the following 150-residue polypeptide: UPF0208 membrane protein VIBHAR_02941 (150 aa).

The next 2 helical transmembrane spans lie at 42–62 (FGIK…MAFN) and 70–90 (AIVV…WLGS).

It belongs to the UPF0208 family.

It is found in the cell inner membrane. This Vibrio campbellii (strain ATCC BAA-1116) protein is UPF0208 membrane protein VIBHAR_02941.